The chain runs to 661 residues: MTEARVSRGALAALLRALCALGCLLGRAAAAPSPIIKFPGDVAPKTDKELAVQYLNTFYGCPKESCNLFVLKDTLKKMQKFFGLPQTGELDQSTIETMRKPRCGNPDVANYNFFPRKPKWDKNQITYRIIGYTPDLDPQTVDDAFARAFQVWSDVTPLRFSRIHDGEADIMINFGRWEHGDGYPFDGKDGLLAHAFAPGPGVGGDSHFDDDELRTLGEGQVVRVKYGNADGEYCKFPFRFNGKEYTSCTDTGRSDGFLWCSTTYNFDKDGKYGFCPHEALFTMGGNADGQPCKFPFRFQGTSYDSCTTEGRTDGYRWCGTTEDYDRDKEYGFCPETAMSTVGGNSEGAPCVLPFTFLGNKHESCTSAGRSDGKLWCATTSNYDDDRKWGFCPDQGYSLFLVAAHEFGHAMGLEHSQDPGALMAPIYTYTKNFRLSHDDIQGIQELYGASPDIDTGTGPTPTLGPVTPELCKQDIVFDGISQIRGEIFFFKDRFIWRTVTPRDKPTGPLLVATFWPELPEKIDAVYEDPQEEKAVFFAGNEYWVYSASTLERGYPKPLTSLGLPPGVQKVDAAFNWSKNKKTYIFAGDKFWRYNEVKKKMDPGFPKLIADAWNAIPDNLDAVVDLQGGGHSYFFKGAYYLKLENQSLKSVKFGSIKSDWLGC.

The first 30 residues, 1–30 (MTEARVSRGALAALLRALCALGCLLGRAAA), serve as a signal peptide directing secretion. Residues 31-110 (APSPIIKFPG…PRCGNPDVAN (80 aa)) constitute a propeptide, activation peptide. The Cysteine switch signature appears at 101 to 108 (PRCGNPDV). Residue Cys-103 coordinates Zn(2+). Residues 111–222 (YNFFPRKPKW…LRTLGEGQVV (112 aa)) form a collagenase-like 1 region. Positions 135 and 169 each coordinate Ca(2+). The Zn(2+) site is built by His-179 and Asp-181. The Ca(2+) site is built by Asp-186 and Gly-187. Residue His-194 participates in Zn(2+) binding. Residues Gly-201, Gly-203, and Asp-205 each coordinate Ca(2+). His-207 contacts Zn(2+). Ca(2+) is bound by residues Asp-209, Asp-210, and Glu-212. Residues 223–397 (RVKYGNADGE…WGFCPDQGYS (175 aa)) form a collagen-binding region. Fibronectin type-II domains lie at 229-277 (ADGE…FCPH), 287-335 (ADGQ…FCPE), and 345-393 (SEGA…FCPD). 6 cysteine pairs are disulfide-bonded: Cys-234–Cys-260, Cys-248–Cys-275, Cys-292–Cys-318, Cys-306–Cys-333, Cys-350–Cys-376, and Cys-364–Cys-391. The interval 398 to 466 (LFLVAAHEFG…GPTPTLGPVT (69 aa)) is collagenase-like 2. Residue His-404 coordinates Zn(2+). The active site involves Glu-405. His-408 and His-414 together coordinate Zn(2+). Positions 415-661 (SQDPGALMAP…GSIKSDWLGC (247 aa)) are required for inhibitor TIMP2 binding. Hemopexin repeat units lie at residues 469 to 517 (LCKQ…WPEL), 518 to 564 (PEKI…GLPP), 566 to 614 (VQKV…WNAI), and 615 to 661 (PDNL…WLGC). Cys-470 and Cys-661 are joined by a disulfide. Residues Asp-477, Asp-522, and Asp-570 each contribute to the Ca(2+) site. Asn-574 is a glycosylation site (N-linked (GlcNAc...) asparagine). Asp-619 contributes to the Ca(2+) binding site. Asn-643 is a glycosylation site (N-linked (GlcNAc...) asparagine).

It belongs to the peptidase M10A family. In terms of assembly, interacts (via the C-terminal hemopexin-like domains-containing region) with the integrin alpha-V/beta-3; the interaction promotes vascular invasion in angiogenic vessels and melamoma cells. Interacts (via the C-terminal PEX domain) with TIMP2 (via the C-terminal); the interaction inhibits the degradation activity. Interacts with GSK3B. It depends on Ca(2+) as a cofactor. Zn(2+) is required as a cofactor. Post-translationally, phosphorylation on multiple sites modulates enzymatic activity. Phosphorylated by PKC in vitro. In terms of processing, the propeptide is processed by MMP14 (MT-MMP1) and MMP16 (MT-MMP3). Autocatalytic cleavage in the C-terminal produces the anti-angiogenic peptide, PEX. This processing appears to be facilitated by binding integrinv/beta3.

The protein localises to the secreted. It is found in the extracellular space. It localises to the extracellular matrix. The protein resides in the membrane. Its subcellular location is the nucleus. It catalyses the reaction Cleavage of gelatin type I and collagen types IV, V, VII, X. Cleaves the collagen-like sequence Pro-Gln-Gly-|-Ile-Ala-Gly-Gln.. Its function is as follows. Ubiquitinous metalloproteinase that is involved in diverse functions such as remodeling of the vasculature, angiogenesis, tissue repair, tumor invasion, inflammation, and atherosclerotic plaque rupture. As well as degrading extracellular matrix proteins, can also act on several nonmatrix proteins such as big endothelial 1 and beta-type CGRP promoting vasoconstriction. Also cleaves KISS at a Gly-|-Leu bond. Appears to have a role in myocardial cell death pathways. Contributes to myocardial oxidative stress by regulating the activity of GSK3beta. Cleaves GSK3beta in vitro. Involved in the formation of the fibrovascular tissues. In terms of biological role, PEX, the C-terminal non-catalytic fragment of MMP2, possesses anti-angiogenic and anti-tumor properties and inhibits cell migration and cell adhesion to FGF2 and vitronectin. Ligand for integrin alpha-v/beta-3 on the surface of blood vessels. The polypeptide is 72 kDa type IV collagenase (MMP2) (Bos taurus (Bovine)).